A 366-amino-acid chain; its full sequence is 3-dehydroquinate synthase (366 aa).

NAD(+)-binding positions include 107–111, 131–132, Lys144, and Lys153; these read GVIGD and TT. Zn(2+) is bound by residues Glu186, His251, and His268.

This sequence belongs to the sugar phosphate cyclases superfamily. Dehydroquinate synthase family. Co(2+) serves as cofactor. Requires Zn(2+) as cofactor. NAD(+) is required as a cofactor.

It is found in the cytoplasm. The catalysed reaction is 7-phospho-2-dehydro-3-deoxy-D-arabino-heptonate = 3-dehydroquinate + phosphate. Its pathway is metabolic intermediate biosynthesis; chorismate biosynthesis; chorismate from D-erythrose 4-phosphate and phosphoenolpyruvate: step 2/7. In terms of biological role, catalyzes the conversion of 3-deoxy-D-arabino-heptulosonate 7-phosphate (DAHP) to dehydroquinate (DHQ). The protein is 3-dehydroquinate synthase of Microcystis aeruginosa (strain NIES-843 / IAM M-2473).